Consider the following 121-residue polypeptide: Putative iron-sulfur cluster insertion protein ErpA (121 aa).

Iron-sulfur cluster contacts are provided by C49, C113, and C115.

It belongs to the HesB/IscA family. In terms of assembly, homodimer. Requires iron-sulfur cluster as cofactor.

Required for insertion of 4Fe-4S clusters. In Paraburkholderia phymatum (strain DSM 17167 / CIP 108236 / LMG 21445 / STM815) (Burkholderia phymatum), this protein is Putative iron-sulfur cluster insertion protein ErpA.